Here is a 458-residue protein sequence, read N- to C-terminus: MRFMQRSKDSLAKWLSAILPVVIVGLVGLFAVTVIRDYGRETAAARQTLLEKGSVLIRALESGSRVGMGMRMHHAQQQALLEEMAGQPGVRWFAVTDEQGTIVMHSNSGMVGKQLYSPQEMQQLHPGDEEVWRRIDSADGEPVLEIYRQFQPMFAAGMHRMRHMQQYAATPQAIFIAFDASNIVSAEDREQRNTLIILFALATVLLASVLSFFWYRRYLRSRQLLQDEMKRKEKLVALGHLAAGVAHEIRNPLSSIKGLAKYFAERAPAGGEAHQLAQVMAKEADRLNRVVSELLELVKPTHLALQAVDLNTLINHSLQLVSQDANCREIQLRFTANDTLPEIQADPDRLTQVLLNLYLNAIQAIGQHGVISVTASESGAGVKISVTDSGKGIAADQLEAIFTPYFTTKAEGTGLGLAVVHNIVEQHGGTIQVASLEGKGARFTLWLPVNITRKDPQG.

The Cytoplasmic portion of the chain corresponds to 1-14 (MRFMQRSKDSLAKW). A helical membrane pass occupies residues 15 to 35 (LSAILPVVIVGLVGLFAVTVI). Topologically, residues 36–194 (RDYGRETAAA…SAEDREQRNT (159 aa)) are periplasmic. A helical transmembrane segment spans residues 195–215 (LIILFALATVLLASVLSFFWY). Residues 216 to 458 (RRYLRSRQLL…VNITRKDPQG (243 aa)) lie on the Cytoplasmic side of the membrane. Positions 244–451 (GVAHEIRNPL…RFTLWLPVNI (208 aa)) constitute a Histidine kinase domain. Position 247 is a phosphohistidine; by autocatalysis (His247).

Post-translationally, autophosphorylated.

It localises to the cell inner membrane. The enzyme catalyses ATP + protein L-histidine = ADP + protein N-phospho-L-histidine.. With respect to regulation, activity of the ZraS/ZraR two-component system is repressed by the zinc-bound form of ZraP, which probably interacts with the periplasmic region of ZraS. Part of the Zra signaling pathway, an envelope stress response (ESR) system composed of the periplasmic accessory protein ZraP, the histidine kinase ZraS and the transcriptional regulator ZraR. The ZraPSR system contributes to antibiotic resistance and is important for membrane integrity in the presence of membrane-targeting biocides. ZraS is a member of the two-component regulatory system ZraS/ZraR. Functions as a membrane-associated sensor kinase that phosphorylates ZraR in response to high concentrations of Zn(2+) or Pb(2+) in the medium. The chain is Sensor histidine kinase ZraS (zraS) from Escherichia coli O157:H7.